We begin with the raw amino-acid sequence, 153 residues long: Small ribosomal subunit protein uS15 (153 aa).

It belongs to the universal ribosomal protein uS15 family. Part of the 30S ribosomal subunit.

This chain is Small ribosomal subunit protein uS15, found in Sulfolobus acidocaldarius (strain ATCC 33909 / DSM 639 / JCM 8929 / NBRC 15157 / NCIMB 11770).